Reading from the N-terminus, the 483-residue chain is Threonine synthase-like 2 (483 aa).

N6-(pyridoxal phosphate)lysine is present on K113.

This sequence belongs to the threonine synthase family. Pyridoxal 5'-phosphate serves as cofactor.

In terms of biological role, acts as a catabolic phospho-lyase on both gamma- and beta-phosphorylated substrates. Degrades O-phospho-threonine (PThr) to alpha-ketobutyrate, ammonia and phosphate. Also degrades O-phospho-homoserine (PHS), but this is not its physiological substrate. This Mus musculus (Mouse) protein is Threonine synthase-like 2 (Thnsl2).